The primary structure comprises 336 residues: MPSCTSFPIGTRKSKLAVIQSEIIREELEKHYPHLEFPIISRDTIGDEILSKALFEFKRQLAKSLWTRELEALLVTNQCRILVHSLKDLPSEMPDGMVIACIPKRSCPLDAIVFKAGSHYKTVADLPPGSVVGTSSIRRRALLARNFPHLRFVDIRGNVGTRLAKLDAPDSQFDCLVLAAAGLFRLGLKDRIAQMLTAPFVYYAVGQGALAVEVRADDKEMIEMLKPLQHQETLYACLAERALMKRLQGGCAIPIGVQTDVLAISNSSYRISLLGTVLSADGLRAAFGNAEAVVSSEEEAEELGITVALALLKNGAGPILEEHQRSSDSEESLKNY.

Residue C251 is modified to S-(dipyrrolylmethanemethyl)cysteine. Phosphoserine is present on residues S327 and S329.

The protein belongs to the HMBS family. Requires dipyrromethane as cofactor.

The catalysed reaction is 4 porphobilinogen + H2O = hydroxymethylbilane + 4 NH4(+). Its pathway is porphyrin-containing compound metabolism; protoporphyrin-IX biosynthesis; coproporphyrinogen-III from 5-aminolevulinate: step 2/4. Tetrapolymerization of the monopyrrole PBG into the hydroxymethylbilane pre-uroporphyrinogen in several discrete steps. In Schizosaccharomyces pombe (strain 972 / ATCC 24843) (Fission yeast), this protein is Porphobilinogen deaminase (hem3).